A 284-amino-acid chain; its full sequence is Tropomyosin alpha-1 chain (284 aa).

Position 1 is an N-acetylmethionine (methionine 1). The segment at 1-38 (MDAIKKKMQMLKLDKENALDRAEQAEADKKAAEDRSKQ) is disordered. The stretch at 1-284 (MDAIKKKMQM…DHALNDMTSI (284 aa)) forms a coiled coil. Residues 12–38 (KLDKENALDRAEQAEADKKAAEDRSKQ) are compositionally biased toward basic and acidic residues. Phosphoserine occurs at positions 31, 45, and 51. The disordered stretch occupies residues 116-136 (AEKAADESERGMKVIESRAQK). 3 positions are modified to phosphoserine: serine 174, serine 186, and serine 206. Lysine 213 is modified (N6-acetyllysine). Serine 252 bears the Phosphoserine mark. Tyrosine 261 bears the Phosphotyrosine mark. Position 271 is a phosphoserine (serine 271). Serine 283 is modified (phosphoserine; by DAPK1).

This sequence belongs to the tropomyosin family. In terms of assembly, homodimer. Heterodimer of an alpha (TPM1, TPM3 or TPM4) and a beta (TPM2) chain. Interacts with HRG (via the HRR domain); the interaction contributes to the antiangiogenic properties of the histidine/proline-rich region (HRR) of HRG. Interacts (via N-terminus) with LMOD2 (via N-terminus) and TMOD1 (via N-terminus). In terms of processing, phosphorylated at Ser-283 by DAPK1 in response to oxidative stress and this phosphorylation enhances stress fiber formation in endothelial cells. In terms of tissue distribution, detected in primary breast cancer tissues but undetectable in normal breast tissues in Sudanese patients. Isoform 1 is expressed in adult and fetal skeletal muscle and cardiac tissues, with higher expression levels in the cardiac tissues. Isoform 10 is expressed in adult and fetal cardiac tissues, but not in skeletal muscle.

The protein resides in the cytoplasm. The protein localises to the cytoskeleton. Binds to actin filaments in muscle and non-muscle cells. Plays a central role, in association with the troponin complex, in the calcium dependent regulation of vertebrate striated muscle contraction. Smooth muscle contraction is regulated by interaction with caldesmon. In non-muscle cells is implicated in stabilizing cytoskeleton actin filaments. This is Tropomyosin alpha-1 chain (TPM1) from Homo sapiens (Human).